Consider the following 320-residue polypeptide: MKKEFGKVGVLFGGRSAEREVSLMSGKGVLAALLSKGIDAHPFDPAERSLAELAAEKFDRVFIALHGRFGEDGSLQGALEQLGIPYTGPGVMASAIAMDKVITKRVCLSHGVPTPKFTALEVEATTAEQLQAIAAEFGMPLMLKAPHEGSTIGIAKVETAEGMQAGFDLCAKYDDVVLVEQFVKGRELTVPVLGSGRNARALPIVEIIAPQGNYDYEHKYFSDDTQYLCPAPFDAAFTKRVQALAVSAFNAVGCTGWARVDFLVRESDNEPFLLEINTSPGMTGHSLVPMSAKVAGTAYEDLCVEILRMAKLGLKPVQHK.

The region spanning 104-308 (KRVCLSHGVP…YEDLCVEILR (205 aa)) is the ATP-grasp domain. 134 to 189 (AAEFGMPLMLKAPHEGSTIGIAKVETAEGMQAGFDLCAKYDDVVLVEQFVKGRELT) provides a ligand contact to ATP. Residues D261, E275, and N277 each contribute to the Mg(2+) site.

This sequence belongs to the D-alanine--D-alanine ligase family. Requires Mg(2+) as cofactor. The cofactor is Mn(2+).

It localises to the cytoplasm. It catalyses the reaction 2 D-alanine + ATP = D-alanyl-D-alanine + ADP + phosphate + H(+). It participates in cell wall biogenesis; peptidoglycan biosynthesis. In terms of biological role, cell wall formation. The chain is D-alanine--D-alanine ligase from Janthinobacterium sp. (strain Marseille) (Minibacterium massiliensis).